The chain runs to 119 residues: Non-specific lipid-transfer protein 12 (119 aa).

A signal peptide spans 1–24; that stretch reads MAFTPKIITCLIVLTIYMASPTES. 4 disulfides stabilise this stretch: Cys28-Cys75, Cys38-Cys52, Cys53-Cys98, and Cys73-Cys112.

The protein belongs to the plant LTP family.

Plant non-specific lipid-transfer proteins transfer phospholipids as well as galactolipids across membranes. May play a role in wax or cutin deposition in the cell walls of expanding epidermal cells and certain secretory tissues. This chain is Non-specific lipid-transfer protein 12 (LTP12), found in Arabidopsis thaliana (Mouse-ear cress).